Consider the following 526-residue polypeptide: tRNA-2-methylthio-N(6)-dimethylallyladenosine synthase (526 aa).

Residues 1–24 (MTQQLNHAKVNQHPGQATLPETAE) are disordered. The MTTase N-terminal domain occupies 28 to 144 (RTYEVKTYGC…LPTLLQRAEH (117 aa)). Residues cysteine 37, cysteine 73, cysteine 107, cysteine 181, cysteine 185, and cysteine 188 each contribute to the [4Fe-4S] cluster site. Positions 167–403 (RESAYAGWVS…MVVQEQVCEE (237 aa)) constitute a Radical SAM core domain. One can recognise a TRAM domain in the interval 406-477 (QKLIGTTVEL…PFFLIADSGV (72 aa)).

The protein belongs to the methylthiotransferase family. MiaB subfamily. Monomer. [4Fe-4S] cluster is required as a cofactor.

It is found in the cytoplasm. The enzyme catalyses N(6)-dimethylallyladenosine(37) in tRNA + (sulfur carrier)-SH + AH2 + 2 S-adenosyl-L-methionine = 2-methylsulfanyl-N(6)-dimethylallyladenosine(37) in tRNA + (sulfur carrier)-H + 5'-deoxyadenosine + L-methionine + A + S-adenosyl-L-homocysteine + 2 H(+). Functionally, catalyzes the methylthiolation of N6-(dimethylallyl)adenosine (i(6)A), leading to the formation of 2-methylthio-N6-(dimethylallyl)adenosine (ms(2)i(6)A) at position 37 in tRNAs that read codons beginning with uridine. The chain is tRNA-2-methylthio-N(6)-dimethylallyladenosine synthase from Corynebacterium glutamicum (strain R).